A 474-amino-acid chain; its full sequence is Phosphatidylserine synthase 2 (474 aa).

Over 1 to 62 (MLRSDVRRVA…DDGTNTFFWR (62 aa)) the chain is Lumenal. A helical transmembrane segment spans residues 63–83 (AHTLTVLFILTCSLGYVTLLE). Over 84–96 (ETPQDTAYNAKRG) the chain is Cytoplasmic. A helical membrane pass occupies residues 97–117 (IIASILVFLCFGVTQAKDGPF). At 118–126 (SRPHPAYWR) the chain is on the lumenal side. The chain crosses the membrane as a helical span at residues 127–147 (FWLCVSVVYELFLIFILFQTV). The Cytoplasmic portion of the chain corresponds to 148–313 (HDGRQFMKFI…EWKPASSLRR (166 aa)). A helical transmembrane segment spans residues 314-334 (WLAVCGIIFVFLLAELNTFYL). K335 is a topological domain (lumenal). A helical membrane pass occupies residues 336–356 (FVLWMPPEHYLVLLRLVFFVN). Residues 357–376 (VGGVAMREIYDFMDDLKFHK) lie on the Cytoplasmic side of the membrane. The chain crosses the membrane as a helical span at residues 377–397 (KLGQQAWMVAAITVTEFLIVV). The Lumenal portion of the chain corresponds to 398-403 (KYDPYT). A helical membrane pass occupies residues 404-424 (ITLPLPFYVTQCWILGIVLVL). Residues 425–474 (TWTVWRFFIRDITLRYKEIRQQKQHRNEEEKSHRNGDVNSEKDTNKHKKH) lie on the Cytoplasmic side of the membrane. Over residues 448-468 (QHRNEEEKSHRNGDVNSEKDT) the composition is skewed to basic and acidic residues. The disordered stretch occupies residues 448 to 474 (QHRNEEEKSHRNGDVNSEKDTNKHKKH).

This sequence belongs to the phosphatidyl serine synthase family.

The protein resides in the endoplasmic reticulum membrane. It carries out the reaction a 1,2-diacyl-sn-glycero-3-phosphoethanolamine + L-serine = a 1,2-diacyl-sn-glycero-3-phospho-L-serine + ethanolamine. It catalyses the reaction 1-hexadecanoyl-2-(9Z-octadecenoyl)-sn-glycero-3-phosphoethanolamine + L-serine = 1-hexadecanoyl-2-(9Z-octadecenoyl)-sn-glycero-3-phospho-L-serine + ethanolamine. The enzyme catalyses 1-hexadecanoyl-2-(4Z,7Z,10Z,13Z,16Z,19Z-docosahexaenoyl)-sn-glycero-3-phosphoethanolamine + L-serine = 1-hexadecanoyl-2-(4Z,7Z,10Z,13Z,16Z,19Z-docosahexaenoyl)-sn-glycero-3-phosphoserine + ethanolamine. The catalysed reaction is 1-octadecanoyl-2-(5Z,8Z,11Z,14Z)-eicosatetraenoyl-sn-glycero-3-phosphoethanolamine + L-serine = 1-octadecanoyl-2-(5Z,8Z,11Z,14Z)-eicosatetraenoyl-sn-glycero-3-phosphoserine + ethanolamine. It carries out the reaction 1-octadecanoyl-2-(4Z,7Z,10Z,13Z,16Z,19Z-docosahexaenoyl)-sn-glycero-3-phosphoethanolamine + L-serine = 1-octadecanoyl-2-(4Z,7Z,10Z,13Z,16Z,19Z-docosahexaenoyl)-sn-glycero-3-phosphoserine + ethanolamine. It catalyses the reaction 1-(1Z-octadecenyl)-2-(4Z,7Z,10Z,13Z,16Z,19Z-docosahexaenoyl)-sn-glycero-3-phosphoethanolamine + L-serine = 1-(1Z-octadecenyl)-2-(4Z,7Z,10Z,13Z,16Z,19Z-docosahexaenoyl)-sn-glycero-3-phospho-L-serine + ethanolamine. The enzyme catalyses 1-octadecanoyl-2-(9Z-octadecenoyl)-sn-glycero-3-phosphoethanolamine + L-serine = 1-octadecanoyl-2-(9Z-octadecenoyl)-sn-glycero-3-phospho-L-serine + ethanolamine. The catalysed reaction is 1-(1Z-octadecenyl)-2-(9Z-octadecenoyl)-sn-glycero-3-phosphoethanolamine + L-serine = 1-(1Z-octadecenyl)-2-(9Z-octadecenoyl)-sn-glycero-3-phospho-L-serine + ethanolamine. It carries out the reaction 1-(1Z-octadecenyl)-2-(5Z,8Z,11Z,14Z- eicosatetraenoyl)-sn-glycero-3-phosphoethanolamine + L-serine = 1-(1Z-octadecenyl)-2-(5Z,8Z,11Z,14Z-eicosatetraenoyl)-sn-glycero-3-phospho-L-serine + ethanolamine. It functions in the pathway phospholipid metabolism; phosphatidylserine biosynthesis. Its function is as follows. Catalyzes a base-exchange reaction in which the polar head group of phosphatidylethanolamine (PE) or phosphatidylcholine (PC) is replaced by L-serine. Catalyzes the conversion of phosphatatidylethanolamine and does not act on phosphatidylcholine. Can utilize both phosphatidylethanolamine (PE) plasmalogen and diacyl PE as substrate and the latter is six times better utilized, indicating the importance of an ester linkage at the sn-1 position. Although it shows no sn-1 fatty acyl preference, exhibits significant preference towards docosahexaenoic acid (22:6n-3) compared with 18:1 or 20:4 at the sn-2 position. In Xenopus tropicalis (Western clawed frog), this protein is Phosphatidylserine synthase 2 (ptdss2).